A 977-amino-acid chain; its full sequence is Short transient receptor potential channel 4 (977 aa).

At 1 to 324 (MAQFYYKRNV…YDEFPGWRRR (324 aa)) the chain is on the cytoplasmic side. ANK repeat units follow at residues 29–60 (LSPS…IYFK), 71–93 (RTAL…LSFN), 96–118 (VGDA…LLNH), and 141–165 (PDIT…VQKG). Zn(2+)-binding residues include H172, C176, C178, and C181. Residues 223–260 (LSWELQELSKVENEFKSEYEELSRQCKQFAKDLLDQTR) are a coiled coil. Positions 325–359 (HWAVKMVTCFIIGLLFPVFSVCYLIAPKSPLGLFI) form an intramembrane region, discontinuously helical. Topologically, residues 360–362 (RKP) are cytoplasmic. Residues 363–383 (FIKFICHTASYLTFLFLLLLA) form a helical membrane-spanning segment. Residues 384 to 403 (SQHIDRSDLNRQGPPPTIVE) lie on the Extracellular side of the membrane. The chain crosses the membrane as a helical span at residues 404–418 (WMILPWVLGFIWGEI). Ca(2+) contacts are provided by E417, Q420, N435, and D438. Residues 419–432 (KQMWDGGLQDYIHD) lie on the Cytoplasmic side of the membrane. A helical membrane pass occupies residues 433–453 (WWNLMDFVMNSLYLATISLKI). Topologically, residues 454-475 (VAFVKYSALNPRESWDMWHPTL) are extracellular. Residues 476–498 (VAEALFAIANIFSSLRLISLFTA) form a helical membrane-spanning segment. At 499–511 (NSHLGPLQISLGR) the chain is on the cytoplasmic side. The helical transmembrane segment at 512–534 (MLLDILKFLFIYCLVLLAFANGL) threads the bilayer. The Extracellular portion of the chain corresponds to 535-599 (NQLYFYYEET…HEFTDFVGAT (65 aa)). Residues C549 and C554 are joined by a disulfide bond. Residues 600–620 (MFGTYNVISLVVLLNMLIAMM) traverse the membrane as a helical segment. Positions 615–977 (MLIAMMNNSY…AHEDYVTTRL (363 aa)) are interaction with ITPR1, ITPR2 and ITPR3. The Cytoplasmic portion of the chain corresponds to 621–977 (NNSYQLIADH…AHEDYVTTRL (357 aa)). Positions 767–790 (AASSASSADSDEKSHSEGNGKDKR) are disordered. Over residues 776–787 (SDEKSHSEGNGK) the composition is skewed to basic and acidic residues. Y959 and Y972 each carry phosphotyrosine; by FYN. The interval 975-977 (TRL) is PDZ-binding domain.

Belongs to the transient receptor (TC 1.A.4) family. STrpC subfamily. TRPC4 sub-subfamily. In terms of assembly, homotetramer. Heterotetramer with TRPC1 and/or TRPC5. Forms a heteromeric ion channel with TRPC1, with a 1:3 TRPC1:TRPC4 stoichiometry. Interacts with TRPC4AP. Isoform alpha but not isoform beta interacts with ITPR1, ITPR2 and ITPR3. Interacts with NHERF1. Interacts with MX1 and RNF24. Interacts (via CIRB domain) with SESTD1 (via the spectrin 1 repeat) and SPTBN5 (via C-terminus). Interacts with CDH5 and CTNNB1. Interacts (via protein 4.1-binding domain) with EPB41L2. Interacts with PLSCR1.

The protein localises to the cell membrane. It carries out the reaction Ca(2+)(in) = Ca(2+)(out). The catalysed reaction is Na(+)(in) = Na(+)(out). The enzyme catalyses Li(+)(in) = Li(+)(out). It catalyses the reaction Cs(+)(in) = Cs(+)(out). With respect to regulation, may be operated by a phosphatidylinositol second messenger system activated by receptor tyrosine kinases or G-protein coupled receptors. May be activated by intracellular calcium store depletion. Its function is as follows. Forms a receptor-activated non-selective calcium permeant cation channel. Acts as a cell-cell contact-dependent endothelial calcium entry channel. Forms a homomeric ion channel or a heteromeric ion channel with TRPC1; the heteromeric ion channel has reduced calcium permeability compared to the homomeric channel. Also permeable to monovalent ions including sodium, lithium and cesium ions. In terms of biological role, forms a non-selective a receptor-activated calcium permeant cation channel. Probably is operated by a phosphatidylinositol second messenger system activated by receptor tyrosine kinases or G-protein coupled receptors. This Rattus norvegicus (Rat) protein is Short transient receptor potential channel 4 (Trpc4).